Here is a 492-residue protein sequence, read N- to C-terminus: Probable cobyric acid synthase (492 aa).

The 187-residue stretch at 248 to 434 (PVRIAVVRLP…MHGLFQNPGA (187 aa)) folds into the GATase cobBQ-type domain. The active-site Nucleophile is C327. The active site involves H426.

It belongs to the CobB/CobQ family. CobQ subfamily.

The protein operates within cofactor biosynthesis; adenosylcobalamin biosynthesis. Its function is as follows. Catalyzes amidations at positions B, D, E, and G on adenosylcobyrinic A,C-diamide. NH(2) groups are provided by glutamine, and one molecule of ATP is hydrogenolyzed for each amidation. The polypeptide is Probable cobyric acid synthase (Methanoculleus marisnigri (strain ATCC 35101 / DSM 1498 / JR1)).